We begin with the raw amino-acid sequence, 872 residues long: Metabotropic glutamate receptor 2 (872 aa).

Residues 1 to 18 (MESLLGFLALLLLWGAVA) form the signal peptide. At 19–567 (EGPAKKVLTL…QEYIRWGDAW (549 aa)) the chain is on the extracellular side. The cysteines at positions 50 and 92 are disulfide-linked. L-glutamate contacts are provided by Arg57, Arg61, Ser145, Ala166, and Thr168. Residues Asn203 and Asn286 are each glycosylated (N-linked (GlcNAc...) asparagine). Disulfide bonds link Cys234-Cys518, Cys355-Cys362, Cys400-Cys407, Cys500-Cys519, Cys504-Cys522, Cys525-Cys537, and Cys540-Cys553. Asp295 contributes to the L-glutamate binding site. N-linked (GlcNAc...) asparagine glycosylation occurs at Asn338. An L-glutamate-binding site is contributed by Lys377. Asn402 carries N-linked (GlcNAc...) asparagine glycosylation. N-linked (GlcNAc...) asparagine glycosylation is present at Asn547. Residues 568-590 (AVGPVTIACLGALATLFVLGVFV) traverse the membrane as a helical segment. Over 591–604 (RHNATPVVKASGRE) the chain is Cytoplasmic. Residues 605–625 (LCYILLGGVFLCYCMTFVFIA) form a helical membrane-spanning segment. Residues 626–636 (KPSTAVCTLRR) lie on the Extracellular side of the membrane. A disulfide bridge connects residues Cys632 and Cys721. Residues 637-655 (LGLGTAFSVCYSALLTKTN) form a helical membrane-spanning segment. At 656–679 (RIARIFGGAREGAQRPRFISPASQ) the chain is on the cytoplasmic side. Positions 677 to 685 (ASQVAICLA) are important for interaction with HTR2A. A helical transmembrane segment spans residues 680–700 (VAICLALISGQLLIVAAWLVV). Over 701–725 (EAPGTGKETAPERREVVTLRCNHRD) the chain is Extracellular. Residues 726–747 (ASMLGSLAYNVLLIALCTLYAF) traverse the membrane as a helical segment. Residues 748-760 (KTRKCPENFNEAK) lie on the Cytoplasmic side of the membrane. The chain crosses the membrane as a helical span at residues 761-783 (FIGFTMYTTCIIWLAFLPIFYVT). The Extracellular portion of the chain corresponds to 784–793 (SSDYRVQTTT). The helical transmembrane segment at 794 to 819 (MCVSVSLSGSVVLGCLFAPKLHIILF) threads the bilayer. The Cytoplasmic portion of the chain corresponds to 820–872 (QPQKNVVSHRAPTSRFGSAAPRASANLGQGSGSQFVPTVCNGREVVDSTTSSL).

The protein belongs to the G-protein coupled receptor 3 family. Forms heterodimers with GRM3 or GRM4. Interacts with GNAI1. Interacts with TAMALIN. Interacts with HTR2A. Is widely distributed in the CNS and prominent expression is seen in Golgi cells of the cerebellum and some particular neuronal cells in other brain regions.

The protein localises to the cell membrane. It is found in the synapse. It localises to the cell projection. Its subcellular location is the dendrite. Dimeric G protein-coupled receptor which is activated by the excitatory neurotransmitter L-glutamate. Plays critical roles in modulating synaptic transmission and neuronal excitability. Upon activation by glutamate, inhibits presynaptic calcium channels, reducing further glutamate release and dampening excitatory signaling. Mechanistically, ligand binding causes a conformation change that triggers signaling via guanine nucleotide-binding proteins (G proteins) and modulates the activity of down-stream effectors, such as adenylate cyclase. May mediate suppression of neurotransmission or may be involved in synaptogenesis or synaptic stabilization. In Rattus norvegicus (Rat), this protein is Metabotropic glutamate receptor 2 (Grm2).